The sequence spans 190 residues: U1 small nuclear ribonucleoprotein C-1 (190 aa).

The Matrin-type zinc-finger motif lies at 4–36 (YYCDYCDVFLVSESPSVRKAHNSGRNHLTNVRD). Residues 57–190 (FETGGGNSTS…PDRARQLGLI (134 aa)) are disordered. Positions 72-82 (GNPPGSQPGPP) are enriched in pro residues. Residues 109–124 (AMLALMNGQNGMSSPG) show a composition bias toward low complexity. Pro residues predominate over residues 125–141 (SGPPPMRFAGPPIPNNM). Over residues 180 to 190 (NPDRARQLGLI) the composition is skewed to basic and acidic residues.

Belongs to the U1 small nuclear ribonucleoprotein C family. As to quaternary structure, U1 snRNP is composed of the 7 core Sm proteins B/B', D1, D2, D3, E, F and G that assemble in a heptameric protein ring on the Sm site of the small nuclear RNA to form the core snRNP, and at least 3 U1 snRNP-specific proteins U1-70K, U1-A and U1-C. U1-C interacts with U1 snRNA and the 5' splice-site region of the pre-mRNA.

It is found in the nucleus. Functionally, component of the spliceosomal U1 snRNP, which is essential for recognition of the pre-mRNA 5' splice-site and the subsequent assembly of the spliceosome. U1-C is directly involved in initial 5' splice-site recognition for both constitutive and regulated alternative splicing. The interaction with the 5' splice-site seems to precede base-pairing between the pre-mRNA and the U1 snRNA. Stimulates commitment or early (E) complex formation by stabilizing the base pairing of the 5' end of the U1 snRNA and the 5' splice-site region. The sequence is that of U1 small nuclear ribonucleoprotein C-1 from Puccinia graminis f. sp. tritici (strain CRL 75-36-700-3 / race SCCL) (Black stem rust fungus).